The primary structure comprises 478 residues: Antiviral innate immune response effector IFIT1 (478 aa).

TPR repeat units follow at residues 52-85 (VGIH…MQEE), 95-128 (LVTW…CKKL), 141-174 (IDCE…DPEN), 183-216 (ISAY…NPDN), 218-249 (YIKV…NMSS), and 251-284 (TYVF…TPTS). Tryptophan 147 contacts mRNA. Glycine 190 lines the RNA pocket. Residues lysine 259, histidine 289, glutamine 290, and lysine 336 each coordinate RNA. TPR repeat units follow at residues 305-339 (ATKG…KPTF), 340-373 (EVAH…KPVV), 378-412 (QDIH…EQAS), and 437-470 (LESL…AADF).

This sequence belongs to the IFIT family. Component of an interferon-dependent multiprotein complex, at least composed of IFIT1, IFIT2 and IFIT3. Interacts (via TPR repeats 1-4) with RPL15. Interacts with STING1/MITA; could disrupt STING1 interaction with MAVS or TBK1, acting as a negative-feedback regulator of virus-triggered signaling. Interacts with EIF3E; this could be an alternative way to inhibit translation. Phosphorylated. In terms of processing, ISGylated.

It localises to the cytoplasm. Its function is as follows. Plays a key role in the innate immune response as part of an interferon-dependent multiprotein complex, recognizing and sequestering viral RNAs that lack host-specific 2'-O-methylation at their 5' cap. By distinguishing these RNAs from host mRNAs, inhibits their translation by competing with the translation initiation factor eIF4E. Could also prevent viral replication through its interaction with DNA replication origin-binding protein E1 of several viruses. Causes the translocation of E1 from the nucleus to the cytoplasm and can also inhibit its helicase activity in vitro. Exhibits antiviral activity against many viruses from the Flaviviridae (West Nile virus, Dengue virus, hepatitis C virus), Coronaviridae (human 229E coronavirus, SARS-CoV-2 and SARS-CoV), Poxviridae (vaccinia virus) and Togaviridae (Sindbis virus) families. The sequence is that of Antiviral innate immune response effector IFIT1 from Homo sapiens (Human).